The sequence spans 713 residues: Putative ERAD-associated E3 ubiquitin-protein ligase component (713 aa).

Positions 1–20 (MQLLNFLICLFFIFKRCVFT) are cleaved as a signal peptide. N-linked (GlcNAc...) asparagine glycans are attached at residues asparagine 48 and asparagine 123. 2 Sel1-like repeats span residues 83-124 (PESQ…TQNY) and 125-160 (TYALLALAYKHLNGLSTPMSVDKGVELYKQVAHQIS). An N-linked (GlcNAc...) asparagine glycan is attached at asparagine 211. Sel1-like repeat units follow at residues 212 to 248 (ISAHISLATIYQYGTPGKLKDIKLAVKHYLAAIRLVN), 280 to 315 (SIAAFRLGCMALHGELGKPDPSLAYAWFEYGVSLNH), 490 to 525 (IHSLIKIGDFYRMGLGTSAKPELAFSYYSQAAAIHP), and 527 to 562 (ALAYWRLGWMHEYGVGVPVDFEMAKKNYDNALMHDT). An N-linked (GlcNAc...) asparagine glycan is attached at asparagine 314. Residues 621–655 (QLPPEPPTLQVDRTPQQPDPQETSESLPSPNTEEM) are disordered. The span at 631 to 652 (VDRTPQQPDPQETSESLPSPNT) shows a compositional bias: polar residues. A helical transmembrane segment spans residues 671–691 (GRFLETACVTLIVVVVGLVLM).

Belongs to the sel-1 family.

It localises to the endoplasmic reticulum membrane. Its function is as follows. Component of the endoplasmic reticulum quality control (ERQC) system involved in ubiquitin-dependent degradation of missfolded endoplasmic reticulum proteins. This chain is Putative ERAD-associated E3 ubiquitin-protein ligase component, found in Schizosaccharomyces pombe (strain 972 / ATCC 24843) (Fission yeast).